The sequence spans 271 residues: Shikimate dehydrogenase (NADP(+)) (271 aa).

Residues 14 to 16 and Thr61 contribute to the shikimate site; that span reads SKS. The Proton acceptor role is filled by Lys65. Residues Asn86 and Asp102 each contribute to the shikimate site. NADP(+) contacts are provided by residues 126–130, 149–154, and Met213; these read GAGGA and NRTFSR. Tyr215 provides a ligand contact to shikimate. An NADP(+)-binding site is contributed by Gly238.

This sequence belongs to the shikimate dehydrogenase family. In terms of assembly, homodimer.

The enzyme catalyses shikimate + NADP(+) = 3-dehydroshikimate + NADPH + H(+). Its pathway is metabolic intermediate biosynthesis; chorismate biosynthesis; chorismate from D-erythrose 4-phosphate and phosphoenolpyruvate: step 4/7. Involved in the biosynthesis of the chorismate, which leads to the biosynthesis of aromatic amino acids. Catalyzes the reversible NADPH linked reduction of 3-dehydroshikimate (DHSA) to yield shikimate (SA). The chain is Shikimate dehydrogenase (NADP(+)) from Histophilus somni (strain 2336) (Haemophilus somnus).